The sequence spans 163 residues: MAKESSFDIVSKVDLAEVTNAINIAMKEIKTRYDFKGSKSDISLEKDELVLISDDEFKLEQLKDVLIGKLIKRGVATKNIQYGKIEPASGGTVRQRAKLVQGIDKDNAKKINTIIKSTGLKVKSQVQDDQIRVSGKSKDDLQKVIAAIREADLPIDVQFVNYR.

This sequence belongs to the YajQ family.

Its function is as follows. Nucleotide-binding protein. The protein is Nucleotide-binding protein GTNG_0630 of Geobacillus thermodenitrificans (strain NG80-2).